The sequence spans 60 residues: MDHRLLEIIACPVCNGKLWYNQEKQELICKLDKLAFPLRDGIPVLLETEARVLTSEESQS.

It belongs to the UPF0434 family.

The protein is UPF0434 protein YcaR of Escherichia fergusonii (strain ATCC 35469 / DSM 13698 / CCUG 18766 / IAM 14443 / JCM 21226 / LMG 7866 / NBRC 102419 / NCTC 12128 / CDC 0568-73).